A 258-amino-acid chain; its full sequence is Thiazole synthase (258 aa).

The active-site Schiff-base intermediate with DXP is K96. 1-deoxy-D-xylulose 5-phosphate-binding positions include G157, 183 to 184, and 205 to 206; these read AG and NT.

It belongs to the ThiG family. In terms of assembly, homotetramer. Forms heterodimers with either ThiH or ThiS.

Its subcellular location is the cytoplasm. It carries out the reaction [ThiS sulfur-carrier protein]-C-terminal-Gly-aminoethanethioate + 2-iminoacetate + 1-deoxy-D-xylulose 5-phosphate = [ThiS sulfur-carrier protein]-C-terminal Gly-Gly + 2-[(2R,5Z)-2-carboxy-4-methylthiazol-5(2H)-ylidene]ethyl phosphate + 2 H2O + H(+). The protein operates within cofactor biosynthesis; thiamine diphosphate biosynthesis. In terms of biological role, catalyzes the rearrangement of 1-deoxy-D-xylulose 5-phosphate (DXP) to produce the thiazole phosphate moiety of thiamine. Sulfur is provided by the thiocarboxylate moiety of the carrier protein ThiS. In vitro, sulfur can be provided by H(2)S. This Alkaliphilus metalliredigens (strain QYMF) protein is Thiazole synthase.